Consider the following 106-residue polypeptide: U1-lycotoxin-Ls1z (106 aa).

The N-terminal stretch at 1 to 19 (MKVLVVVALLVTLISYSSS) is a signal peptide. A propeptide spanning residues 20-40 (EGIDDLEADELLSLMANEQTR) is cleaved from the precursor. Intrachain disulfides connect Cys-43/Cys-58, Cys-50/Cys-67, Cys-57/Cys-85, and Cys-69/Cys-83.

Belongs to the neurotoxin 19 (CSTX) family. 03 subfamily. Expressed by the venom gland.

The protein localises to the secreted. The sequence is that of U1-lycotoxin-Ls1z from Lycosa singoriensis (Wolf spider).